Consider the following 279-residue polypeptide: Sarcosine/dimethylglycine N-methyltransferase (279 aa).

The protein belongs to the methyltransferase superfamily. Monomer.

The catalysed reaction is sarcosine + 2 S-adenosyl-L-methionine = glycine betaine + 2 S-adenosyl-L-homocysteine + 2 H(+). The enzyme catalyses sarcosine + S-adenosyl-L-methionine = N,N-dimethylglycine + S-adenosyl-L-homocysteine + H(+). It catalyses the reaction N,N-dimethylglycine + S-adenosyl-L-methionine = glycine betaine + S-adenosyl-L-homocysteine + H(+). It participates in amine and polyamine biosynthesis; betaine biosynthesis via glycine pathway; betaine from glycine: step 2/3. The protein operates within amine and polyamine biosynthesis; betaine biosynthesis via glycine pathway; betaine from glycine: step 3/3. P-chloromercuribenzoate acid inhibits 23% of the SDMT activities on sarcosine and dimethylglycine, and S-adenosylhomocysteine (AdoHcy) inhibits completely GSMT activities. Catalyzes the methylation of sarcosine and dimethylglycine to dimethylglycine and betaine, respectively, with S-adenosylmethionine (AdoMet) acting as the methyl donor. It has strict specificity for sarcosine and dimethylglycine as the methyl group acceptors. The chain is Sarcosine/dimethylglycine N-methyltransferase from Halorhodospira halochloris (Ectothiorhodospira halochloris).